A 481-amino-acid polypeptide reads, in one-letter code: Beta-amyrin 28-monooxygenase (481 aa).

Residues 4-24 traverse the membrane as a helical segment; that stretch reads FYVPLLSLFVLFVSLSFYFLF. Cysteine 428 contributes to the heme binding site.

It belongs to the cytochrome P450 family. It depends on heme as a cofactor.

The protein resides in the membrane. It catalyses the reaction beta-amyrin + 3 reduced [NADPH--hemoprotein reductase] + 3 O2 = oleanolate + 3 oxidized [NADPH--hemoprotein reductase] + 4 H2O + 4 H(+). Its function is as follows. Catalyzes the oxidation of the methyl group to a carboxyl group at the C-28 position of beta-amyrin to form oleanolate. This chain is Beta-amyrin 28-monooxygenase, found in Kalopanax septemlobus (Castor aralia).